The chain runs to 126 residues: Small ribosomal subunit protein bS6 (126 aa).

The tract at residues 103 to 126 is disordered; it reads LKAKDERKAPEALVEEVEAEDADE. The span at 115-126 shows a compositional bias: acidic residues; the sequence is LVEEVEAEDADE.

Belongs to the bacterial ribosomal protein bS6 family.

Its function is as follows. Binds together with bS18 to 16S ribosomal RNA. This Glaesserella parasuis serovar 5 (strain SH0165) (Haemophilus parasuis) protein is Small ribosomal subunit protein bS6.